Reading from the N-terminus, the 171-residue chain is Co-chaperone protein HscB (171 aa).

The region spanning 2–74 (DYFTLFGLPA…LTRAEYLLSL (73 aa)) is the J domain.

It belongs to the HscB family. In terms of assembly, interacts with HscA and stimulates its ATPase activity. Interacts with IscU.

In terms of biological role, co-chaperone involved in the maturation of iron-sulfur cluster-containing proteins. Seems to help targeting proteins to be folded toward HscA. This chain is Co-chaperone protein HscB, found in Salmonella choleraesuis (strain SC-B67).